We begin with the raw amino-acid sequence, 787 residues long: Integrin beta-3 (787 aa).

The first 25 residues, 1-25 (MRTRRPGQLWATLLALGALAGVVVG), serve as a signal peptide directing secretion. The Extracellular portion of the chain corresponds to 27 to 717 (SNICTTRGVN…EEPECPKGPD (691 aa)). The PSI domain maps to 29 to 75 (ICTTRGVNSCQQCLAVSPVCAWCSDESLPQNSPRCNLKKNLLKDKCS). Disulfide bonds link cysteine 30-cysteine 48, cysteine 38-cysteine 460, cysteine 41-cysteine 63, cysteine 51-cysteine 74, cysteine 202-cysteine 209, cysteine 257-cysteine 298, cysteine 399-cysteine 411, cysteine 431-cysteine 458, cysteine 462-cysteine 482, cysteine 473-cysteine 485, cysteine 487-cysteine 496, cysteine 498-cysteine 528, cysteine 511-cysteine 526, cysteine 520-cysteine 531, cysteine 533-cysteine 546, cysteine 548-cysteine 569, cysteine 553-cysteine 567, cysteine 561-cysteine 572, and cysteine 574-cysteine 583. The VWFA domain maps to 134–376 (DYPVDIYYLM…QLIVDAYGKI (243 aa)). Residues serine 146 and serine 148 each contribute to the Mg(2+) site. Ca(2+)-binding residues include serine 148, aspartate 151, aspartate 152, and aspartate 183. Residues 202-209 (CYTMKSTC) are CX3CL1-binding. The tract at residues 202 to 209 (CYTMKSTC) is involved in CX3CL1-, NRG1-, FGF1- and IGF1-binding. Residues asparagine 240, aspartate 242, proline 244, glutamate 245, and aspartate 276 each coordinate Ca(2+). Position 245 (glutamate 245) interacts with Mg(2+). Residues 292-312 (LPNDGRCHIGPDNHYSASTTM) form a CX3CL1-binding region. Residues asparagine 345 and asparagine 396 are each glycosylated (N-linked (GlcNAc...) asparagine). 4 I-EGF domains span residues 462 to 497 (CQAF…SMCE), 498 to 547 (CSEE…KYCE), 548 to 584 (CDDF…YYCN), and 585 to 624 (CTTR…DTCE). The N-linked (GlcNAc...) asparagine glycan is linked to asparagine 477. The N-linked (GlcNAc...) asparagine glycan is linked to asparagine 584. Intrachain disulfides connect cysteine 585–cysteine 608, cysteine 592–cysteine 606, cysteine 600–cysteine 611, cysteine 613–cysteine 623, cysteine 626–cysteine 629, cysteine 633–cysteine 680, cysteine 639–cysteine 660, cysteine 642–cysteine 656, and cysteine 688–cysteine 712. Asparagine 679 carries an N-linked (GlcNAc...) asparagine glycan. Residues 718–738 (ILVVLLSVMGAILLIGLATLL) traverse the membrane as a helical segment. The Cytoplasmic segment spans residues 739–787 (IWKLLITIHDRKEFAKFEEERARAKWDTANNPLYKEATSTFTNITYRGT). The residue at position 766 (threonine 766) is a Phosphothreonine. A Phosphotyrosine modification is found at tyrosine 772. The LIR signature appears at 776–782 (TSTFTNI). At threonine 778 the chain carries Phosphothreonine. At tyrosine 784 the chain carries Phosphotyrosine.

Belongs to the integrin beta chain family. In terms of assembly, heterodimer of an alpha and a beta subunit. Beta-3 (ITGB3) associates with either alpha-IIB (ITGA2B) or alpha-V (ITGAV). Interacts with FLNB and COMP. Interacts with PDIA6 following platelet stimulation. Interacts with SYK; upon activation by ITGB3 promotes platelet adhesion. Interacts with MYO10. Interacts with DAB2. Interacts with FERMT2. Integrin ITGAV:ITGB3 interacts with FBLN5 (via N-terminus). Interacts with EMP2; regulates the levels of the heterodimer ITGA5:ITGB3 integrin expression on the plasma membrane. ITGAV:ITGB3 interacts with CCN3. ITGAV:ITGB3 and ITGA2B:ITGB3 interact with SELP (via C-type lectin domain); the interaction mediates cell-cell interaction and adhesion. ITGAV:ITGB3 interacts with AGRA2. ITGAV:ITGB3 is found in a ternary complex with CX3CR1 and CX3CL1. ITGAV:ITGB3 is found in a ternary complex with NRG1 and ERBB3. ITGAV:ITGB3 is found in a ternary complex with FGF1 and FGFR1. ITGAV:ITGB3 interacts with FGF2; it is likely that FGF2 can simultaneously bind ITGAV:ITGB3 and FGF receptors. ITGAV:ITGB3 binds to IL1B. ITGAV:ITGB3 is found in a ternary complex with IGF1 and IGF1R. ITGAV:ITGB3 interacts with IGF2. ITGAV:ITGB3 interacts with FBN1. ITGAV:ITGB3 interacts with CD9, CD81 and CD151 (via second extracellular domain). Interacts (via the allosteric site (site 2)) with CXCL12 in a CXCR4-independent manner. Interacts with MXRA8/DICAM; the interaction inhibits ITGAV:ITGB3 heterodimer formation. ITGAV:ITGB3 interacts with PTN. Forms a complex with PTPRZ1 and PTN that stimulates endothelial cell migration through ITGB3 Tyr-772 phosphorylation. ITGAV:ITGB3 interacts with SLC6A4. Interacts with SLC6A4 (via C-terminus); this interaction regulates SLC6A4 trafficking. ITGA2B:ITGB3 interacts with PPIA/CYPA; the interaction is ROS and PPIase activity-dependent and is increased in the presence of thrombin. Interacts with tensin TNS3; TNS3 also interacts with PEAK1, thus acting as an adapter molecule to bridge the association of PEAK1 with ITGB3. Interacts with TM4SF19. Post-translationally, phosphorylated on tyrosine residues in response to thrombin-induced platelet aggregation. Probably involved in outside-in signaling.

It localises to the cell membrane. The protein localises to the cell projection. It is found in the lamellipodium membrane. The protein resides in the cell junction. Its subcellular location is the focal adhesion. It localises to the postsynaptic cell membrane. The protein localises to the synapse. In terms of biological role, integrin alpha-V/beta-3 (ITGAV:ITGB3) is a receptor for cytotactin, fibronectin, laminin, matrix metalloproteinase-2, osteopontin, osteomodulin, prothrombin, thrombospondin, vitronectin and von Willebrand factor. Integrin alpha-IIB/beta-3 (ITGA2B:ITGB3) is a receptor for fibronectin, fibrinogen, plasminogen, prothrombin, thrombospondin and vitronectin. Integrins alpha-IIB/beta-3 and alpha-V/beta-3 recognize the sequence R-G-D in a wide array of ligands. Integrin alpha-IIB/beta-3 recognizes the sequence H-H-L-G-G-G-A-K-Q-A-G-D-V in fibrinogen gamma chain. Following activation integrin alpha-IIB/beta-3 brings about platelet/platelet interaction through binding of soluble fibrinogen. This step leads to rapid platelet aggregation which physically plugs ruptured endothelial surfaces. Fibrinogen binding enhances SELP expression in activated platelets. ITGAV:ITGB3 binds to fractalkine (CX3CL1) and acts as its coreceptor in CX3CR1-dependent fractalkine signaling. ITGAV:ITGB3 binds to NRG1 (via EGF domain) and this binding is essential for NRG1-ERBB signaling. ITGAV:ITGB3 binds to FGF1 and this binding is essential for FGF1 signaling. ITGAV:ITGB3 binds to FGF2 and this binding is essential for FGF2 signaling. ITGAV:ITGB3 binds to IGF1 and this binding is essential for IGF1 signaling. ITGAV:ITGB3 binds to IGF2 and this binding is essential for IGF2 signaling. ITGAV:ITGB3 binds to IL1B and this binding is essential for IL1B signaling. ITGAV:ITGB3 binds to PLA2G2A via a site (site 2) which is distinct from the classical ligand-binding site (site 1) and this induces integrin conformational changes and enhanced ligand binding to site 1. ITGAV:ITGB3 acts as a receptor for fibrillin-1 (FBN1) and mediates R-G-D-dependent cell adhesion to FBN1. In brain, plays a role in synaptic transmission and plasticity. Involved in the regulation of the serotonin neurotransmission, is required to localize to specific compartments within the synapse the serotonin receptor SLC6A4 and for an appropriate reuptake of serotonin. Controls excitatory synaptic strength by regulating GRIA2-containing AMPAR endocytosis, which affects AMPAR abundance and composition. ITGAV:ITGB3 acts as a receptor for CD40LG. ITGAV:ITGB3 acts as a receptor for IBSP and promotes cell adhesion and migration to IBSP. This is Integrin beta-3 from Rattus norvegicus (Rat).